Consider the following 165-residue polypeptide: Ubiquitin-conjugating enzyme E2 G2 (165 aa).

N-acetylalanine is present on Ala-2. The UBC core domain maps to 4–164 (TALKRLMAEY…AKQIVQKSLG (161 aa)). Cys-89 acts as the Glycyl thioester intermediate in catalysis.

Belongs to the ubiquitin-conjugating enzyme family. Interacts with AUP1 (via C-terminus); the interaction recruits UBE2G2 to lipid droplets. Interacts with ubiquitin ligases AMFR/gp78 and RNF139/TRC8; recruitment to lipid droplets by AUP1 facilitates interaction of UBE2G2 with AMFR and RNF139, leading to sterol-induced ubiquitination of 3-hydroxy-3-methylglutaryl coenzyme A reductase and its subsequent proteasomal degradation.

The protein resides in the endoplasmic reticulum. It localises to the lipid droplet. It catalyses the reaction S-ubiquitinyl-[E1 ubiquitin-activating enzyme]-L-cysteine + [E2 ubiquitin-conjugating enzyme]-L-cysteine = [E1 ubiquitin-activating enzyme]-L-cysteine + S-ubiquitinyl-[E2 ubiquitin-conjugating enzyme]-L-cysteine.. The protein operates within protein modification; protein ubiquitination. Accepts ubiquitin from the E1 complex and catalyzes its covalent attachment to other proteins. In vitro catalyzes 'Lys-48'-linked polyubiquitination. Involved in endoplasmic reticulum-associated degradation (ERAD). Required for sterol-induced ubiquitination of 3-hydroxy-3-methylglutaryl coenzyme A reductase and its subsequent proteasomal degradation. The protein is Ubiquitin-conjugating enzyme E2 G2 of Homo sapiens (Human).